Here is a 293-residue protein sequence, read N- to C-terminus: Cytidine deaminase 6 (293 aa).

2 consecutive CMP/dCMP-type deaminase domains span residues 16-147 (RGPS…FGPD) and 178-293 (EDCS…TNKN). 57–59 (NVE) serves as a coordination point for substrate. His70 contributes to the Zn(2+) binding site. Glu72 acts as the Proton donor in catalysis. Residues Cys103 and Cys106 each contribute to the Zn(2+) site.

The protein belongs to the cytidine and deoxycytidylate deaminase family. In terms of assembly, homodimer. Requires Zn(2+) as cofactor.

It carries out the reaction cytidine + H2O + H(+) = uridine + NH4(+). The catalysed reaction is 2'-deoxycytidine + H2O + H(+) = 2'-deoxyuridine + NH4(+). Its function is as follows. This enzyme scavenges exogenous and endogenous cytidine and 2'-deoxycytidine for UMP synthesis. The chain is Cytidine deaminase 6 (CDA6) from Arabidopsis thaliana (Mouse-ear cress).